We begin with the raw amino-acid sequence, 335 residues long: Glutamyl-tRNA reductase (335 aa).

Substrate contacts are provided by residues 60-63 (TCHR), serine 110, 115-117 (ETE), and glutamine 121. The active-site Nucleophile is cysteine 61. Residue 189-194 (GYSEIN) coordinates NADP(+).

Belongs to the glutamyl-tRNA reductase family. Homodimer.

The catalysed reaction is (S)-4-amino-5-oxopentanoate + tRNA(Glu) + NADP(+) = L-glutamyl-tRNA(Glu) + NADPH + H(+). The protein operates within porphyrin-containing compound metabolism; protoporphyrin-IX biosynthesis; 5-aminolevulinate from L-glutamyl-tRNA(Glu): step 1/2. Catalyzes the NADPH-dependent reduction of glutamyl-tRNA(Glu) to glutamate 1-semialdehyde (GSA). In Chlamydia trachomatis serovar L2 (strain ATCC VR-902B / DSM 19102 / 434/Bu), this protein is Glutamyl-tRNA reductase.